A 95-amino-acid chain; its full sequence is MTLSLNDIKRVAKLARIEISETDAQQNLVRLSGIFDLIEQMRAVDTQGIKPMSHSQDMVQRLREDIVTESDQRTLFQSVAPQIEDGYYLVPKVIE.

It belongs to the GatC family. Heterotrimer of A, B and C subunits.

It catalyses the reaction L-glutamyl-tRNA(Gln) + L-glutamine + ATP + H2O = L-glutaminyl-tRNA(Gln) + L-glutamate + ADP + phosphate + H(+). The enzyme catalyses L-aspartyl-tRNA(Asn) + L-glutamine + ATP + H2O = L-asparaginyl-tRNA(Asn) + L-glutamate + ADP + phosphate + 2 H(+). Functionally, allows the formation of correctly charged Asn-tRNA(Asn) or Gln-tRNA(Gln) through the transamidation of misacylated Asp-tRNA(Asn) or Glu-tRNA(Gln) in organisms which lack either or both of asparaginyl-tRNA or glutaminyl-tRNA synthetases. The reaction takes place in the presence of glutamine and ATP through an activated phospho-Asp-tRNA(Asn) or phospho-Glu-tRNA(Gln). The chain is Aspartyl/glutamyl-tRNA(Asn/Gln) amidotransferase subunit C from Nitrosomonas europaea (strain ATCC 19718 / CIP 103999 / KCTC 2705 / NBRC 14298).